Reading from the N-terminus, the 128-residue chain is Large ribosomal subunit protein bL12 (128 aa).

The segment at 97-128 (GAPSTLKEGVSKEDAEEAKKQLTEAGATVEVK) is disordered. Basic and acidic residues predominate over residues 105 to 118 (GVSKEDAEEAKKQL).

The protein belongs to the bacterial ribosomal protein bL12 family. As to quaternary structure, homodimer. Part of the ribosomal stalk of the 50S ribosomal subunit. Forms a multimeric L10(L12)X complex, where L10 forms an elongated spine to which 2 to 4 L12 dimers bind in a sequential fashion. Binds GTP-bound translation factors.

Forms part of the ribosomal stalk which helps the ribosome interact with GTP-bound translation factors. Is thus essential for accurate translation. This Lawsonia intracellularis (strain PHE/MN1-00) protein is Large ribosomal subunit protein bL12.